Here is a 150-residue protein sequence, read N- to C-terminus: SsrA-binding protein (150 aa).

The protein belongs to the SmpB family.

The protein localises to the cytoplasm. Required for rescue of stalled ribosomes mediated by trans-translation. Binds to transfer-messenger RNA (tmRNA), required for stable association of tmRNA with ribosomes. tmRNA and SmpB together mimic tRNA shape, replacing the anticodon stem-loop with SmpB. tmRNA is encoded by the ssrA gene; the 2 termini fold to resemble tRNA(Ala) and it encodes a 'tag peptide', a short internal open reading frame. During trans-translation Ala-aminoacylated tmRNA acts like a tRNA, entering the A-site of stalled ribosomes, displacing the stalled mRNA. The ribosome then switches to translate the ORF on the tmRNA; the nascent peptide is terminated with the 'tag peptide' encoded by the tmRNA and targeted for degradation. The ribosome is freed to recommence translation, which seems to be the essential function of trans-translation. The polypeptide is SsrA-binding protein (Campylobacter jejuni subsp. doylei (strain ATCC BAA-1458 / RM4099 / 269.97)).